The following is an 848-amino-acid chain: Adenylate cyclase (848 aa).

Residues 1–535 (MYLYIETLKQ…DVSHHFPLRL (535 aa)) form a catalytic region. The segment at 541–848 (KALYSPCEIR…DTPLLQQYFS (308 aa)) is regulatory. Position 609 is a phosphohistidine; by CRR (H609).

This sequence belongs to the adenylyl cyclase class-1 family.

It is found in the cytoplasm. It catalyses the reaction ATP = 3',5'-cyclic AMP + diphosphate. Its activity is regulated as follows. The regulatory domain is involved in the regulation of cyclase activity by the carbon source. Activated by the PTS system, glucose-specific IIA component (CRR). Catalyzes the formation of the second messenger cAMP from ATP. Its transcript is probably degraded by endoribonuclease LS (rnlA), decreasing cAMP levels and the negative regulator Crp-cAMP, which then induces its own transcription again. This is Adenylate cyclase (cyaA) from Escherichia coli (strain K12).